Reading from the N-terminus, the 174-residue chain is Large ribosomal subunit protein uL10 (174 aa).

This sequence belongs to the universal ribosomal protein uL10 family. As to quaternary structure, part of the ribosomal stalk of the 50S ribosomal subunit. The N-terminus interacts with L11 and the large rRNA to form the base of the stalk. The C-terminus forms an elongated spine to which L12 dimers bind in a sequential fashion forming a multimeric L10(L12)X complex.

Its function is as follows. Forms part of the ribosomal stalk, playing a central role in the interaction of the ribosome with GTP-bound translation factors. The protein is Large ribosomal subunit protein uL10 of Rubrobacter xylanophilus (strain DSM 9941 / JCM 11954 / NBRC 16129 / PRD-1).